Reading from the N-terminus, the 347-residue chain is NADH-ubiquinone oxidoreductase chain 2 (347 aa).

The next 10 membrane-spanning stretches (helical) occupy residues 1–21, 25–45, 59–79, 96–116, 148–168, 178–198, 200–220, 237–257, 274–294, and 326–346; these read MNPI…TIVM, HWLT…PMLM, YFLT…INLM, IILT…FWVP, IINL…GGWG, IMAY…IYNP, LTML…MLLI, MPLI…LPPL, NSII…YFYM, and LSPL…MMIL.

It belongs to the complex I subunit 2 family. As to quaternary structure, core subunit of respiratory chain NADH dehydrogenase (Complex I) which is composed of 45 different subunits. Interacts with TMEM242.

The protein resides in the mitochondrion inner membrane. It carries out the reaction a ubiquinone + NADH + 5 H(+)(in) = a ubiquinol + NAD(+) + 4 H(+)(out). Its function is as follows. Core subunit of the mitochondrial membrane respiratory chain NADH dehydrogenase (Complex I) which catalyzes electron transfer from NADH through the respiratory chain, using ubiquinone as an electron acceptor. Essential for the catalytic activity and assembly of complex I. This chain is NADH-ubiquinone oxidoreductase chain 2, found in Gardnerycteris crenulata (Striped hairy-nosed bat).